The sequence spans 275 residues: Ribosomal RNA small subunit methyltransferase A (275 aa).

The S-adenosyl-L-methionine site is built by asparagine 20, leucine 22, glycine 47, glutamate 68, aspartate 90, and asparagine 110.

The protein belongs to the class I-like SAM-binding methyltransferase superfamily. rRNA adenine N(6)-methyltransferase family. RsmA subfamily.

It is found in the cytoplasm. It carries out the reaction adenosine(1518)/adenosine(1519) in 16S rRNA + 4 S-adenosyl-L-methionine = N(6)-dimethyladenosine(1518)/N(6)-dimethyladenosine(1519) in 16S rRNA + 4 S-adenosyl-L-homocysteine + 4 H(+). Specifically dimethylates two adjacent adenosines (A1518 and A1519) in the loop of a conserved hairpin near the 3'-end of 16S rRNA in the 30S particle. May play a critical role in biogenesis of 30S subunits. In Chlorobaculum tepidum (strain ATCC 49652 / DSM 12025 / NBRC 103806 / TLS) (Chlorobium tepidum), this protein is Ribosomal RNA small subunit methyltransferase A.